We begin with the raw amino-acid sequence, 347 residues long: Chlorophyll a/b light-harvesting protein PcbB (347 aa).

The next 6 helical transmembrane spans lie at Gly-25 to Ile-45, Leu-64 to Val-84, Ala-91 to Val-111, Leu-206 to Thr-226, Leu-247 to Val-267, and Leu-308 to Ile-328.

Belongs to the PsbB/PsbC family. IsiA/Pcb subfamily. As to quaternary structure, the antenna complex consists of chlorophylls (a and b) and chlorophyll a/b binding proteins. Requires chlorophyll a as cofactor. Chlorophyll b serves as cofactor.

It localises to the cellular thylakoid membrane. Functionally, the antenna complex functions as a light receptor, it captures and delivers excitation energy to photosystems II and I. The Prochlorales pcb genes are not related to higher plant LHCs. In Prochlorothrix hollandica, this protein is Chlorophyll a/b light-harvesting protein PcbB (pcbB).